The following is a 284-amino-acid chain: 4-diphosphocytidyl-2-C-methyl-D-erythritol kinase (284 aa).

Lys-9 is a catalytic residue. 90-100 (PLVSGLGGDSS) lines the ATP pocket. Asp-132 is an active-site residue.

It belongs to the GHMP kinase family. IspE subfamily.

It catalyses the reaction 4-CDP-2-C-methyl-D-erythritol + ATP = 4-CDP-2-C-methyl-D-erythritol 2-phosphate + ADP + H(+). It functions in the pathway isoprenoid biosynthesis; isopentenyl diphosphate biosynthesis via DXP pathway; isopentenyl diphosphate from 1-deoxy-D-xylulose 5-phosphate: step 3/6. Catalyzes the phosphorylation of the position 2 hydroxy group of 4-diphosphocytidyl-2C-methyl-D-erythritol. In Dehalococcoides mccartyi (strain ATCC BAA-2266 / KCTC 15142 / 195) (Dehalococcoides ethenogenes (strain 195)), this protein is 4-diphosphocytidyl-2-C-methyl-D-erythritol kinase.